The chain runs to 234 residues: Small ribosomal subunit protein eS4 (234 aa).

Residues 38–99 enclose the S4 RNA-binding; degenerate domain; the sequence is IPLLIALRDY…GNDYLVSYDR (62 aa).

Belongs to the eukaryotic ribosomal protein eS4 family.

The chain is Small ribosomal subunit protein eS4 (rps4e) from Picrophilus torridus (strain ATCC 700027 / DSM 9790 / JCM 10055 / NBRC 100828 / KAW 2/3).